Reading from the N-terminus, the 223-residue chain is MGMRYRALHSWDVRPDEAVEIQKMLAGSVRFQRVDRVETVAGADVSFSGSRAHAAAVLLDYHDMRLLDVSFAEMDVVYPYIPGLLTFREGPVILRALEGIDEADVLLFDGQGIAHPRRFGEASHLGLLLDRPSIGCAKSRLWGEFREPDGERGSFSLLVDRGEVVGAALRTRTNVRPVFVSPGHMSDLSSAIEIALNCARGYRVPEPLRLAHILSLKRARMTR.

Positions 44 and 109 each coordinate Mg(2+).

It belongs to the endonuclease V family. Mg(2+) is required as a cofactor.

The protein resides in the cytoplasm. The enzyme catalyses Endonucleolytic cleavage at apurinic or apyrimidinic sites to products with a 5'-phosphate.. Functionally, DNA repair enzyme involved in the repair of deaminated bases. Selectively cleaves double-stranded DNA at the second phosphodiester bond 3' to a deoxyinosine leaving behind the intact lesion on the nicked DNA. This is Endonuclease V from Methanothrix thermoacetophila (strain DSM 6194 / JCM 14653 / NBRC 101360 / PT) (Methanosaeta thermophila).